The primary structure comprises 300 residues: Haloalkane dehalogenase (300 aa).

An AB hydrolase-1 domain is found at 32 to 155 (AIVFQHGNPT…PAVRGVFQGF (124 aa)). The active-site Nucleophile is aspartate 109. Glutamate 133 acts as the Proton donor in catalysis. The active-site Proton acceptor is the histidine 273.

This sequence belongs to the haloalkane dehalogenase family. Type 2 subfamily. In terms of assembly, monomer.

The catalysed reaction is 1-haloalkane + H2O = a halide anion + a primary alcohol + H(+). Catalyzes hydrolytic cleavage of carbon-halogen bonds in halogenated aliphatic compounds, leading to the formation of the corresponding primary alcohols, halide ions and protons. The protein is Haloalkane dehalogenase of Mycobacterium tuberculosis (strain ATCC 25177 / H37Ra).